A 102-amino-acid chain; its full sequence is PE family immunomodulator PE15 (102 aa).

The PE domain maps to 3-91 (LRVVPESLAG…SGASYAARDA (89 aa)).

This sequence belongs to the mycobacterial PE family.

It localises to the secreted. Its subcellular location is the cell envelope. The protein resides in the cell surface. Its function is as follows. May play a pivotal role in the evasion of host immune response by M.tuberculosis. Mediates production of IL-10 via activation of the p38 and ERK1/2 mitogen-activated protein kinase (MAPK) signaling pathways. This Mycobacterium tuberculosis (strain CDC 1551 / Oshkosh) protein is PE family immunomodulator PE15 (PE15).